Consider the following 337-residue polypeptide: tRNA N6-adenosine threonylcarbamoyltransferase (337 aa).

Fe cation-binding residues include His110 and His114. Residues 133 to 137 (LVSGK), Asp166, Gly179, and Asn271 contribute to the substrate site. Asp300 lines the Fe cation pocket.

Belongs to the KAE1 / TsaD family. Fe(2+) is required as a cofactor.

It is found in the cytoplasm. The enzyme catalyses L-threonylcarbamoyladenylate + adenosine(37) in tRNA = N(6)-L-threonylcarbamoyladenosine(37) in tRNA + AMP + H(+). Functionally, required for the formation of a threonylcarbamoyl group on adenosine at position 37 (t(6)A37) in tRNAs that read codons beginning with adenine. Is involved in the transfer of the threonylcarbamoyl moiety of threonylcarbamoyl-AMP (TC-AMP) to the N6 group of A37, together with TsaE and TsaB. TsaD likely plays a direct catalytic role in this reaction. The chain is tRNA N6-adenosine threonylcarbamoyltransferase from Buchnera aphidicola subsp. Schizaphis graminum (strain Sg).